The primary structure comprises 498 residues: Putative antiporter subunit mnhD2 (498 aa).

The next 14 helical transmembrane spans lie at 2-22, 32-52, 78-98, 108-128, 130-150, 161-181, 209-229, 240-260, 271-291, 308-328, 330-350, 368-388, 403-423, and 450-470; these read LSNL…ILVF, YLYL…LIYV, LSLI…AYGF, YHLP…FLTS, LFNL…LITL, IIYV…IGLL, ISLI…FMWL, LAAL…IRFF, IHPL…IGVI, IGFI…GAIF, LVND…LVYI, FFGV…PFSG, GNYI…YSLF, and GILS…PVLL.

It belongs to the CPA3 antiporters (TC 2.A.63) subunit D family. In terms of assembly, may form a heterooligomeric complex that consists of seven subunits: mnhA2, mnhB2, mnhC2, mnhD2, mnhE2, mnhF2 and mnhG2.

The protein localises to the cell membrane. This Staphylococcus aureus (strain MRSA252) protein is Putative antiporter subunit mnhD2 (mnhD2).